A 224-amino-acid polypeptide reads, in one-letter code: uncharacterized protein (224 aa).

An N-terminal signal peptide occupies residues 1–30; sequence MSRSSSSMATVLVVLMVVSAGGLSPPCAAA. N-linked (GlcNAc...) asparagine glycosylation occurs at asparagine 141.

Its subcellular location is the secreted. This is an uncharacterized protein from Oryza sativa subsp. japonica (Rice).